A 109-amino-acid polypeptide reads, in one-letter code: Nucleoid-associated protein Ping_2276 (109 aa).

This sequence belongs to the YbaB/EbfC family. In terms of assembly, homodimer.

It is found in the cytoplasm. The protein resides in the nucleoid. In terms of biological role, binds to DNA and alters its conformation. May be involved in regulation of gene expression, nucleoid organization and DNA protection. This Psychromonas ingrahamii (strain DSM 17664 / CCUG 51855 / 37) protein is Nucleoid-associated protein Ping_2276.